Here is a 195-residue protein sequence, read N- to C-terminus: Ribosome maturation factor RimM (195 aa).

One can recognise a PRC barrel domain in the interval 101–191; sequence ADEWYPKDLI…YLTLDPPGGL (91 aa).

This sequence belongs to the RimM family. In terms of assembly, binds ribosomal protein uS19.

Its subcellular location is the cytoplasm. Its function is as follows. An accessory protein needed during the final step in the assembly of 30S ribosomal subunit, possibly for assembly of the head region. Essential for efficient processing of 16S rRNA. May be needed both before and after RbfA during the maturation of 16S rRNA. It has affinity for free ribosomal 30S subunits but not for 70S ribosomes. This Bifidobacterium adolescentis (strain ATCC 15703 / DSM 20083 / NCTC 11814 / E194a) protein is Ribosome maturation factor RimM.